A 250-amino-acid chain; its full sequence is Probable E3 ubiquitin-protein ligase RHY1A (250 aa).

Residues 1 to 10 (MTSASELFST) are compositionally biased toward polar residues. The disordered stretch occupies residues 1–106 (MTSASELFST…ETQSSSFVNL (106 aa)). Basic residues predominate over residues 29–47 (YRHHSHHHHRRHGVHHHNQ). A compositionally biased stretch (basic and acidic residues) spans 48–58 (RHDSDGCDPLR). Basic residues predominate over residues 60 to 69 (PTPRLRRFFH). Residues 71-80 (PIQERSRPIR) show a composition bias toward basic and acidic residues. Residues 91-102 (TDSTDTETQSSS) show a composition bias toward low complexity. The RING-type; atypical zinc finger occupies 203-244 (CSICLESFTKGDMLISLPCTHSFHSSCLNPWLRACGDCPCCR).

It carries out the reaction S-ubiquitinyl-[E2 ubiquitin-conjugating enzyme]-L-cysteine + [acceptor protein]-L-lysine = [E2 ubiquitin-conjugating enzyme]-L-cysteine + N(6)-ubiquitinyl-[acceptor protein]-L-lysine.. The protein operates within protein modification; protein ubiquitination. Its function is as follows. Probable E3 ubiquitin-protein ligase that may possess E3 ubiquitin ligase activity in vitro. The protein is Probable E3 ubiquitin-protein ligase RHY1A of Arabidopsis thaliana (Mouse-ear cress).